The chain runs to 338 residues: MNQNVNNAITMTVLGAGSYGTSLAISLARYGANVILWGHDAEHIAQLEIDRANEAFLPGVAFPESLILSADLEMAVQASRDLLVVVPSHVFGLVLSDVKPFLREDSRICWATKGLEPETGRLLKEVAVDAVGAEVPLAVLSGPTFAKELAAGMPTAIAVSSPDDAFVEDLQEKIHCSKTFRVYSNSDFIGMQLGGAVKNVIAIGAGMSDGIGFGANARTALITRGLAEMCRLGAALGAQKETFMGMAGLGDLVLTCTDNQSRNRRFGLALGQGKSVDQAQIDIGQVVEGYRNTKEVWALAQRYGVEMPISEQIYQVLYQGKDAREAAKDLLARDKKYE.

Serine 18, tyrosine 19, histidine 39, and lysine 113 together coordinate NADPH. Residues lysine 113, glycine 142, and threonine 144 each coordinate sn-glycerol 3-phosphate. Alanine 146 contributes to the NADPH binding site. Positions 198, 251, 261, 262, and 263 each coordinate sn-glycerol 3-phosphate. Lysine 198 acts as the Proton acceptor in catalysis. Arginine 262 serves as a coordination point for NADPH. NADPH contacts are provided by valine 286 and glutamate 288.

The protein belongs to the NAD-dependent glycerol-3-phosphate dehydrogenase family.

The protein localises to the cytoplasm. It catalyses the reaction sn-glycerol 3-phosphate + NAD(+) = dihydroxyacetone phosphate + NADH + H(+). The catalysed reaction is sn-glycerol 3-phosphate + NADP(+) = dihydroxyacetone phosphate + NADPH + H(+). It participates in membrane lipid metabolism; glycerophospholipid metabolism. Catalyzes the reduction of the glycolytic intermediate dihydroxyacetone phosphate (DHAP) to sn-glycerol 3-phosphate (G3P), the key precursor for phospholipid synthesis. The protein is Glycerol-3-phosphate dehydrogenase [NAD(P)+] of Photobacterium profundum (strain SS9).